A 679-amino-acid chain; its full sequence is Stress-70 protein, mitochondrial (679 aa).

The transit peptide at 1-46 (MISASRAAAARLVGTAASRSPAAARPQDGWNGLSHEAFRFVSRRDY) directs the protein to the mitochondrion. The tract at residues 1-432 (MISASRAAAA…IQGGVLAGDV (432 aa)) is interaction with NFS1. The ADP site is built by threonine 63 and asparagine 64. The interval 63-431 (TNSCVAVMEG…AIQGGVLAGD (369 aa)) is nucleotide-binding domain (NBD). Position 76 is an N6-acetyllysine (lysine 76). Threonine 87 bears the Phosphothreonine mark. Lysine 135 and lysine 138 each carry N6-acetyllysine; alternate. N6-succinyllysine; alternate occurs at positions 135 and 138. Lysine 143 is modified (N6-acetyllysine). Residue lysine 206 is modified to N6-acetyllysine; alternate. Lysine 206 carries the post-translational modification N6-succinyllysine; alternate. Lysine 206 carries the N6-malonyllysine; alternate modification. N6-acetyllysine occurs at positions 234 and 288. N6-acetyllysine; alternate is present on lysine 300. Lysine 300 bears the N6-succinyllysine; alternate mark. Positions 313, 316, and 320 each coordinate ADP. Lysine 360 carries the post-translational modification N6-acetyllysine; alternate. The residue at position 360 (lysine 360) is an N6-succinyllysine; alternate. Lysine 368 carries the N6-succinyllysine modification. Positions 388 and 391 each coordinate ADP. The residue at position 394 (lysine 394) is an N6-succinyllysine. Residue serine 408 is modified to Phosphoserine. The interdomain linker stretch occupies residues 432–441 (VTDVLLLDVT). Positions 432–679 (VTDVLLLDVT…QKEDQKEEKQ (248 aa)) are interaction with FXN and ISCU. The interval 442 to 679 (PLSLGIETLG…QKEDQKEEKQ (238 aa)) is substrate-binding domain (SBD). Position 513 is an omega-N-methylarginine (arginine 513). 2 positions are modified to N6-acetyllysine; alternate: lysine 567 and lysine 600. N6-succinyllysine; alternate occurs at positions 567 and 600. Position 610 is an N6-succinyllysine (lysine 610). At lysine 612 the chain carries N6-acetyllysine. N6-acetyllysine; alternate is present on lysine 646. Lysine 646 carries the N6-succinyllysine; alternate modification. The disordered stretch occupies residues 656–679 (ASEREGSGSSGTGEQKEDQKEEKQ). The span at 669 to 679 (EQKEDQKEEKQ) shows a compositional bias: basic and acidic residues.

This sequence belongs to the heat shock protein 70 family. Interacts strongly with the intermediate form of FXN and weakly with its mature form. Interacts with HSCB. Associates with the mitochondrial contact site and cristae organizing system (MICOS) complex, composed of at least MICOS10/MIC10, CHCHD3/MIC19, CHCHD6/MIC25, APOOL/MIC27, IMMT/MIC60, APOO/MIC23/MIC26 and QIL1/MIC13. This complex was also known under the names MINOS or MitOS complex. The MICOS complex associates with mitochondrial outer membrane proteins SAMM50, MTX1, MTX2 and DNAJC11, mitochondrial inner membrane protein TMEM11 and with HSPA9. Interacts with DNLZ, the interaction is required to prevent self-aggregation. Interacts with TESPA1. Interacts with PDPN. Interacts with NFU1, NFS1 and ISCU. Interacts with TP53; the interaction promotes TP53 degradation. Interacts (via SBD domain) with UBXN2A; the interaction with UBXN2A inhibits HSPA9/MOT-2 interaction with and degradation of TP53, thereby promotes TP53 translocation to the nucleus. Interacts with ITPR1 AND VDAC1; this interaction couples ITPR1 to VDAC1. Component of the TIM23 mitochondrial inner membrane pre-sequence translocase complex.

It is found in the mitochondrion. The protein resides in the nucleus. Its subcellular location is the nucleolus. It localises to the cytoplasm. The protein localises to the mitochondrion matrix. The catalysed reaction is ATP + H2O = ADP + phosphate + H(+). The chaperone activity is regulated by ATP-induced allosteric coupling of the nucleotide-binding (NBD) and substrate-binding (SBD) domains. ATP binding in the NBD leads to a conformational change in the NBD, which is transferred through the interdomain linker (IDL) to the substrate-binding domain (SBD). This elicits a reduced substrate affinity and a faster substrate exchange rate. Upon hydrolysis of ATP to ADP, the protein undergoes a conformational change that increases its affinity for substrate proteins. It cycles through repeated phases of ATP hydrolysis and nucleotide exchange, facilitating repeated cycles of substrate binding and release. Functions in collaboration with co-chaperones. Functions with the co-chaperone, DNLZ, to maintain solubility and regulate ATP hydrolysis. Nucleotide exchange factors, GRPEL1 and GRPEL2, accelerate nucleotide exchange. In terms of biological role, mitochondrial chaperone that plays a key role in mitochondrial protein import, folding, and assembly. Plays an essential role in the protein quality control system, the correct folding of proteins, the re-folding of misfolded proteins, and the targeting of proteins for subsequent degradation. These processes are achieved through cycles of ATP binding, ATP hydrolysis, and ADP release, mediated by co-chaperones. In mitochondria, it associates with the TIM (translocase of the inner membrane) protein complex to assist in the import and folding of mitochondrial proteins. Plays an important role in mitochondrial iron-sulfur cluster (ISC) biogenesis. Interacts with and stabilizes ISC cluster assembly proteins FXN, NFU1, NFS1 and ISCU. Regulates erythropoiesis via stabilization of ISC assembly. Regulates mitochondrial calcium-dependent apoptosis by coupling two calcium channels, ITPR1 and VDAC1, at the mitochondria-associated endoplasmic reticulum (ER) membrane to facilitate calcium transport from the ER lumen to the mitochondria intermembrane space, providing calcium for the downstream calcium channel MCU, which releases it into the mitochondrial matrix. Although primarily located in the mitochondria, it is also found in other cellular compartments. In the cytosol, it associates with proteins involved in signaling, apoptosis, or senescence. It may play a role in cell cycle regulation via its interaction with and promotion of degradation of TP53. May play a role in the control of cell proliferation and cellular aging. Protects against reactive oxygen species (ROS). Extracellular HSPA9 plays a cytoprotective role by preventing cell lysis following immune attack by the membrane attack complex by disrupting formation of the complex. This chain is Stress-70 protein, mitochondrial, found in Mus musculus (Mouse).